A 164-amino-acid polypeptide reads, in one-letter code: CB1 cannabinoid receptor-interacting protein 1 (164 aa).

This sequence belongs to the CNRIP family. In terms of assembly, interacts with the cannabinoid receptor CNR1 (via C-terminus). Does not interact with cannabinoid receptor CNR2.

Suppresses cannabinoid receptor CNR1-mediated tonic inhibition of voltage-gated calcium channels. In terms of biological role, does not suppress cannabinoid receptor CNR1-mediated tonic inhibition of voltage-gated calcium channels. This chain is CB1 cannabinoid receptor-interacting protein 1 (CNRIP1), found in Homo sapiens (Human).